The chain runs to 87 residues: Translation initiation factor IF-1 2 (87 aa).

Residues 1–72 enclose the S1-like domain; that stretch reads MAKEELLELD…TKGRINFRHK (72 aa).

It belongs to the IF-1 family. In terms of assembly, component of the 30S ribosomal translation pre-initiation complex which assembles on the 30S ribosome in the order IF-2 and IF-3, IF-1 and N-formylmethionyl-tRNA(fMet); mRNA recruitment can occur at any time during PIC assembly.

Its subcellular location is the cytoplasm. One of the essential components for the initiation of protein synthesis. Stabilizes the binding of IF-2 and IF-3 on the 30S subunit to which N-formylmethionyl-tRNA(fMet) subsequently binds. Helps modulate mRNA selection, yielding the 30S pre-initiation complex (PIC). Upon addition of the 50S ribosomal subunit IF-1, IF-2 and IF-3 are released leaving the mature 70S translation initiation complex. The polypeptide is Translation initiation factor IF-1 2 (Burkholderia vietnamiensis (strain G4 / LMG 22486) (Burkholderia cepacia (strain R1808))).